The chain runs to 419 residues: Protein distal antenna-related (419 aa).

In terms of domain architecture, HTH psq-type spans 15–66 (TRGKRPLRNLTPNDKVRAIQRIHNGETKASVSRDIGVPESTLRGWCKNEQKL). Residues 42–62 (KASVSRDIGVPESTLRGWCKN) constitute a DNA-binding region (H-T-H motif). 2 disordered regions span residues 333–359 (QPGG…PDLE) and 378–419 (EASN…DAEQ).

As to quaternary structure, interacts with itself, dan, ey and dac to form a complex (or complexes) containing the RD factors. Coexpressed with dan in the presumptive distal antenna, but not in the leg imaginal disk. Both proteins are also expressed in the brain and the eye region of the eye-antenna disk. First detected in early L3 eye disks in cells surrounding the newly initiated morphogenetic furrow. Highly expressed in evenly spaced clusters of cells anterior to the furrow, lower levels within and posterior to the furrow.

Its subcellular location is the nucleus. Its function is as follows. Probable transcription factor with a role in the retinal determination (RD) network. Regulates ato expression and is required for normal R8 induction and differentiation. Danr appears to repress Dan expression, but Dan is required for Danr expression anterior to the morphogenetic furrow (MF). Dan and Danr lie downstream of so and require dac function for highest levels of expression. Contributes to differentiation of antenna-specific characteristics; effector gene that acts downstream of homothorax (hth), Distal-less (Dll), cut (ct) and spineless (ss) genes to control differentiation of distal antennal structures. The sequence is that of Protein distal antenna-related from Drosophila melanogaster (Fruit fly).